Reading from the N-terminus, the 393-residue chain is MLQRVILIVLDSVGVGELPDAYKFGDKGTNTLGHVVEKTGIKLPTMEKLGLGNIIPLKTVAPNPNAIGAYGKMAEKSAGKDTTTGHWEIAGLIVEKPFPTYPEGFPKEIIEEFEKRIGRKVLGNKPASGTEIIKELGEEHIKTGYPIVYTSADSVFQIAAHEEVIPLEELYRMCEIAREILKGDHAVGRVIARPFIGSPGNFVRTANRRDFSLKPFGPTVLDMLKEAGYQVYAVGKIEDIFAGQGITDSVHTGNNDEGITATIEAMDAVKKGIIFTNLVDFDMVYGHRNDVNGYAKALKHFDERLPEIMLRLKEEDLLIITADHGCDPTTPGTDHTREYVPLLVYSPSMKEGRNLGLRKTYADVAATIAEIFNVGPIHTGTSFLRELPLKVGV.

Mn(2+) contacts are provided by Asp11, Asp282, His287, Asp323, His324, and His335.

It belongs to the phosphopentomutase family. Mn(2+) is required as a cofactor.

The protein resides in the cytoplasm. It catalyses the reaction 2-deoxy-alpha-D-ribose 1-phosphate = 2-deoxy-D-ribose 5-phosphate. It carries out the reaction alpha-D-ribose 1-phosphate = D-ribose 5-phosphate. It functions in the pathway carbohydrate degradation; 2-deoxy-D-ribose 1-phosphate degradation; D-glyceraldehyde 3-phosphate and acetaldehyde from 2-deoxy-alpha-D-ribose 1-phosphate: step 1/2. Functionally, isomerase that catalyzes the conversion of deoxy-ribose 1-phosphate (dRib-1-P) and ribose 1-phosphate (Rib-1-P) to deoxy-ribose 5-phosphate (dRib-5-P) and ribose 5-phosphate (Rib-5-P), respectively. This chain is Phosphopentomutase, found in Caldanaerobacter subterraneus subsp. tengcongensis (strain DSM 15242 / JCM 11007 / NBRC 100824 / MB4) (Thermoanaerobacter tengcongensis).